A 141-amino-acid chain; its full sequence is Nucleoside diphosphate kinase (141 aa).

ATP-binding residues include Lys-11, Phe-59, Arg-87, Thr-93, Arg-104, and Asn-114. The active-site Pros-phosphohistidine intermediate is His-117.

This sequence belongs to the NDK family. Homotetramer. It depends on Mg(2+) as a cofactor.

The protein resides in the cytoplasm. It carries out the reaction a 2'-deoxyribonucleoside 5'-diphosphate + ATP = a 2'-deoxyribonucleoside 5'-triphosphate + ADP. The catalysed reaction is a ribonucleoside 5'-diphosphate + ATP = a ribonucleoside 5'-triphosphate + ADP. Its function is as follows. Major role in the synthesis of nucleoside triphosphates other than ATP. The ATP gamma phosphate is transferred to the NDP beta phosphate via a ping-pong mechanism, using a phosphorylated active-site intermediate. In Vibrio vulnificus (strain CMCP6), this protein is Nucleoside diphosphate kinase.